A 74-amino-acid chain; its full sequence is Acyl carrier protein (74 aa).

The 73-residue stretch at 1-73 (MAVFEKVQEI…DLVAYVEEKS (73 aa)) folds into the Carrier domain. An O-(pantetheine 4'-phosphoryl)serine modification is found at S35.

This sequence belongs to the acyl carrier protein (ACP) family. In terms of processing, 4'-phosphopantetheine is transferred from CoA to a specific serine of apo-ACP by AcpS. This modification is essential for activity because fatty acids are bound in thioester linkage to the sulfhydryl of the prosthetic group.

The protein localises to the cytoplasm. The protein operates within lipid metabolism; fatty acid biosynthesis. Its function is as follows. Carrier of the growing fatty acid chain in fatty acid biosynthesis. The polypeptide is Acyl carrier protein (Streptococcus pyogenes serotype M1).